The chain runs to 348 residues: F-box protein At2g20380 (348 aa).

The F-box domain maps to Ser14 to Arg60.

In Arabidopsis thaliana (Mouse-ear cress), this protein is F-box protein At2g20380.